The chain runs to 316 residues: 4-hydroxy-3-methylbut-2-enyl diphosphate reductase (316 aa).

Residue Cys12 coordinates [4Fe-4S] cluster. Residues His41 and His74 each coordinate (2E)-4-hydroxy-3-methylbut-2-enyl diphosphate. Residues His41 and His74 each contribute to the dimethylallyl diphosphate site. Isopentenyl diphosphate-binding residues include His41 and His74. Cys96 serves as a coordination point for [4Fe-4S] cluster. (2E)-4-hydroxy-3-methylbut-2-enyl diphosphate is bound at residue His124. His124 is a binding site for dimethylallyl diphosphate. Position 124 (His124) interacts with isopentenyl diphosphate. Glu126 acts as the Proton donor in catalysis. Thr169 contributes to the (2E)-4-hydroxy-3-methylbut-2-enyl diphosphate binding site. Position 199 (Cys199) interacts with [4Fe-4S] cluster. (2E)-4-hydroxy-3-methylbut-2-enyl diphosphate is bound by residues Ser227, Ser228, Asn229, and Ser271. 4 residues coordinate dimethylallyl diphosphate: Ser227, Ser228, Asn229, and Ser271. Residues Ser227, Ser228, Asn229, and Ser271 each contribute to the isopentenyl diphosphate site.

This sequence belongs to the IspH family. Requires [4Fe-4S] cluster as cofactor.

It carries out the reaction isopentenyl diphosphate + 2 oxidized [2Fe-2S]-[ferredoxin] + H2O = (2E)-4-hydroxy-3-methylbut-2-enyl diphosphate + 2 reduced [2Fe-2S]-[ferredoxin] + 2 H(+). The catalysed reaction is dimethylallyl diphosphate + 2 oxidized [2Fe-2S]-[ferredoxin] + H2O = (2E)-4-hydroxy-3-methylbut-2-enyl diphosphate + 2 reduced [2Fe-2S]-[ferredoxin] + 2 H(+). The protein operates within isoprenoid biosynthesis; dimethylallyl diphosphate biosynthesis; dimethylallyl diphosphate from (2E)-4-hydroxy-3-methylbutenyl diphosphate: step 1/1. It participates in isoprenoid biosynthesis; isopentenyl diphosphate biosynthesis via DXP pathway; isopentenyl diphosphate from 1-deoxy-D-xylulose 5-phosphate: step 6/6. Catalyzes the conversion of 1-hydroxy-2-methyl-2-(E)-butenyl 4-diphosphate (HMBPP) into a mixture of isopentenyl diphosphate (IPP) and dimethylallyl diphosphate (DMAPP). Acts in the terminal step of the DOXP/MEP pathway for isoprenoid precursor biosynthesis. This Xylella fastidiosa (strain M12) protein is 4-hydroxy-3-methylbut-2-enyl diphosphate reductase.